The primary structure comprises 398 residues: O-methyltransferase mpaG (398 aa).

(4E,8E)-10-(4,6-dihydroxy-7-methyl-3-oxo-1,3-dihydro-2-benzofuran-5-yl)-4,8-dimethyldeca-4,8-dienoate is bound at residue Ser-144. Ser-144 provides a ligand contact to 4-farnesyl-3,5-dihydroxy-6-methylphthalide. Ser-144 contributes to the 6-O-desmethylmycophenolate binding site. Asn-197 is an S-adenosyl-L-homocysteine binding site. Tyr-199 is a (4E,8E)-10-(4,6-dihydroxy-7-methyl-3-oxo-1,3-dihydro-2-benzofuran-5-yl)-4,8-dimethyldeca-4,8-dienoate binding site. A 4-farnesyl-3,5-dihydroxy-6-methylphthalide-binding site is contributed by Tyr-199. A 6-O-desmethylmycophenolate-binding site is contributed by Tyr-199. Tyr-203, Asp-237, Gly-239, His-244, Asp-245, Asp-264, and Arg-265 together coordinate S-adenosyl-L-homocysteine. Asp-264 contributes to the S-adenosyl-L-methionine binding site. Arg-265 and Gln-267 together coordinate (4E,8E)-10-(4,6-dihydroxy-7-methyl-3-oxo-1,3-dihydro-2-benzofuran-5-yl)-4,8-dimethyldeca-4,8-dienoate. Residue Arg-265 coordinates 6-O-desmethylmycophenolate. 3 residues coordinate S-adenosyl-L-homocysteine: Asp-286, Ile-287, and His-302. Ser-303 is a (4E,8E)-10-(4,6-dihydroxy-7-methyl-3-oxo-1,3-dihydro-2-benzofuran-5-yl)-4,8-dimethyldeca-4,8-dienoate binding site. Residue Ser-303 coordinates 4-farnesyl-3,5-dihydroxy-6-methylphthalide. Ser-303 provides a ligand contact to 6-O-desmethylmycophenolate. Residue His-306 is the Proton acceptor of the active site. Residues Glu-335 and Glu-362 contribute to the active site.

It belongs to the class I-like SAM-binding methyltransferase superfamily. Cation-independent O-methyltransferase family. COMT subfamily. In terms of assembly, homodimer.

The protein resides in the cytoplasm. The protein localises to the cytosol. It catalyses the reaction (4E,8E)-10-(4,6-dihydroxy-7-methyl-3-oxo-1,3-dihydro-2-benzofuran-5-yl)-4,8-dimethyldeca-4,8-dienoate + S-adenosyl-L-methionine = (4E,8E)-10-(4-hydroxy-6-methoxy-7-methyl-3-oxo-1,3-dihydro-2-benzofuran-5-yl)-4,8-dimethyldeca-4,8-dienoate + S-adenosyl-L-homocysteine + H(+). It carries out the reaction 4-farnesyl-3,5-dihydroxy-6-methylphthalide + S-adenosyl-L-methionine = 4-farnesyl-3,5-dihydroxy-6-methoxylphthalide + S-adenosyl-L-homocysteine + H(+). The enzyme catalyses 6-O-desmethylmycophenolate + S-adenosyl-L-methionine = mycophenolate + S-adenosyl-L-homocysteine + H(+). It participates in secondary metabolite biosynthesis; terpenoid biosynthesis. Functionally, O-methyltransferase; part of the gene cluster that mediates the biosynthesis of mycophenolic acid (MPA), the first isolated antibiotic natural product in the world obtained from a culture of Penicillium brevicompactum in 1893. MpaG methylates farnesyl-DHMP-3C (FDHMP-3C) to yield MFDHMP-3C. The first step of the pathway is the synthesis of 5-methylorsellinic acid (5MOA) by the cytosolic polyketide synthase mpaC. 5MOA is then converted to the phthalide compound 5,7-dihydroxy-4,6-dimethylphthalide (DHMP) by the endoplasmic reticulum-bound cytochrome P450 monooxygenase mpaDE. MpaDE first catalyzes hydroxylation of 5-MOA to 4,6-dihydroxy-2-(hydroxymethyl)-3-methylbenzoic acid (DHMB). MpaDE then acts as a lactone synthase that catalyzes the ring closure to convert DHMB into DHMP. The next step is the prenylation of DHMP by the Golgi apparatus-associated prenyltransferase mpaA to yield farnesyl-DHMP (FDHMP). The ER-bound oxygenase mpaB then mediates the oxidative cleavage the C19-C20 double bond in FDHMP to yield FDHMP-3C via a mycophenolic aldehyde intermediate. The O-methyltransferase mpaG catalyzes the methylation of FDHMP-3C to yield MFDHMP-3C. MpaG and mpaB can also switch the order in which they act and, in this case, the conversion of FDHMP to MFDHMP-3C can take place via 5-O-methyl-FDHMP (MFDHMP). After the cytosolic methylation of FDHMP-3C, MFDHMP-3C enters into peroxisomes probably via free diffusion due to its low molecular weight. Upon a peroxisomal CoA ligation reaction, catalyzed by a beta-oxidation component enzyme acyl-CoA ligase ACL891, MFDHMP-3C-CoA would then be restricted to peroxisomes for the following beta-oxidation pathway steps. The peroxisomal beta-oxidation machinery than converts MFDHMP-3C-CoA into MPA_CoA, via a beta-oxidation chain-shortening process. Finally mpaH acts as a peroxisomal acyl-CoA hydrolase with high substrate specificity toward MPA-CoA to release the final product MPA. MpaH can also hydrolyze DMMPA-CoA to release demethylmycophenolic acid (DMMPA) that is further converted to MPA by mpaG. The chain is O-methyltransferase mpaG from Penicillium brevicompactum.